The chain runs to 209 residues: Thiamine-phosphate synthase (209 aa).

Residues 38–42 and asparagine 70 each bind 4-amino-2-methyl-5-(diphosphooxymethyl)pyrimidine; that span reads QLREK. 2 residues coordinate Mg(2+): aspartate 71 and aspartate 90. Serine 109 contributes to the 4-amino-2-methyl-5-(diphosphooxymethyl)pyrimidine binding site. Residue 135-137 coordinates 2-[(2R,5Z)-2-carboxy-4-methylthiazol-5(2H)-ylidene]ethyl phosphate; that stretch reads TPT. Residue lysine 138 coordinates 4-amino-2-methyl-5-(diphosphooxymethyl)pyrimidine. 2-[(2R,5Z)-2-carboxy-4-methylthiazol-5(2H)-ylidene]ethyl phosphate-binding positions include glycine 166 and 186–187; that span reads IS.

Belongs to the thiamine-phosphate synthase family. Mg(2+) serves as cofactor.

The catalysed reaction is 2-[(2R,5Z)-2-carboxy-4-methylthiazol-5(2H)-ylidene]ethyl phosphate + 4-amino-2-methyl-5-(diphosphooxymethyl)pyrimidine + 2 H(+) = thiamine phosphate + CO2 + diphosphate. It carries out the reaction 2-(2-carboxy-4-methylthiazol-5-yl)ethyl phosphate + 4-amino-2-methyl-5-(diphosphooxymethyl)pyrimidine + 2 H(+) = thiamine phosphate + CO2 + diphosphate. It catalyses the reaction 4-methyl-5-(2-phosphooxyethyl)-thiazole + 4-amino-2-methyl-5-(diphosphooxymethyl)pyrimidine + H(+) = thiamine phosphate + diphosphate. It participates in cofactor biosynthesis; thiamine diphosphate biosynthesis; thiamine phosphate from 4-amino-2-methyl-5-diphosphomethylpyrimidine and 4-methyl-5-(2-phosphoethyl)-thiazole: step 1/1. Its function is as follows. Condenses 4-methyl-5-(beta-hydroxyethyl)thiazole monophosphate (THZ-P) and 2-methyl-4-amino-5-hydroxymethyl pyrimidine pyrophosphate (HMP-PP) to form thiamine monophosphate (TMP). This chain is Thiamine-phosphate synthase, found in Syntrophomonas wolfei subsp. wolfei (strain DSM 2245B / Goettingen).